A 433-amino-acid chain; its full sequence is MANVVVVGAQWGDEGKGKVVDIYTEHADDVVRYQGGNNAGHTLVVGEEKVVLHLIPSGILHEGKRCIIGNGVVLDPEVFIQEITRLKDKGRLKDDRALLVSESIHIIMPYHKRIDIAREAKSGEKKIGTTGRGIGPTYEDKIGRRGIRLMDLLDRDVFARKLKENLEEKNVILEKLLGDKPFTFEEIYEQYCGYADILRNYVADTSLILYNDSKAGKKLLFEGAQGTLLDVDHGTYPFVTSSSTCAGGACTGTGVSPRDIHEIIGISKAYVTRVGSGPFPTELLDADGEKLRQVGHEFGATTGRPRRCGWFDAMVVRYAVRVNGLTGVALTKLDVLNDFETIKVCTGYTFEGKPLADLPANLAVFEKCEPVYEELPGWMSDISGARTFEELPEKAKSYVKRLEQLIGCPIVLVSIGPRRDQTIIISNPFQDKV.

Residues 12-18 (GDEGKGK) and 40-42 (GHT) each bind GTP. The active-site Proton acceptor is the aspartate 13. Mg(2+)-binding residues include aspartate 13 and glycine 40. Residues 13-16 (DEGK), 38-41 (NAGH), threonine 130, arginine 144, glutamine 225, threonine 240, and arginine 304 each bind IMP. The active-site Proton donor is the histidine 41. 300–306 (ATTGRPR) is a substrate binding site. GTP contacts are provided by residues arginine 306, 332-334 (KLD), and 414-416 (SIG).

The protein belongs to the adenylosuccinate synthetase family. As to quaternary structure, homodimer. Mg(2+) is required as a cofactor.

Its subcellular location is the cytoplasm. The enzyme catalyses IMP + L-aspartate + GTP = N(6)-(1,2-dicarboxyethyl)-AMP + GDP + phosphate + 2 H(+). The protein operates within purine metabolism; AMP biosynthesis via de novo pathway; AMP from IMP: step 1/2. Plays an important role in the de novo pathway of purine nucleotide biosynthesis. Catalyzes the first committed step in the biosynthesis of AMP from IMP. This Geobacter sulfurreducens (strain ATCC 51573 / DSM 12127 / PCA) protein is Adenylosuccinate synthetase.